The chain runs to 80 residues: Nuclear protein 1 (80 aa).

Disordered regions lie at residues 1-21 (MATL…EDED) and 38-80 (VGGG…KAWR). A compositionally biased stretch (basic and acidic residues) spans 61–80 (GHERKLLTKFQNSERKKAWR). A Nuclear localization signal motif is present at residues 64–80 (RKLLTKFQNSERKKAWR).

Belongs to the NUPR family. In terms of assembly, monomer. Directly interacts with MSL1 and binds MORF4L1, two components of histone acetyltransferase complex; the interaction with MORF4L1 may be mediated by MSL1. Interacts with EP300; this interaction enhances the effect of EP300 on PAX2 transcription factor activity. Interacts with PAXIP1; this interaction prevents PAXIP1 inhibition of PAX2 transcription factor activity. Interacts with COPS5; this interaction allows COPS5-dependent CDKN1B nuclear to cytoplasm translocation. Interacts with RNF2. Interacts with FOXO3; this interaction represses FOXO3 transactivation. Interacts with PTMA; regulates apoptotic process. Interacts with MYOD1, EP300 and DDX5; this interaction coordinates the association of anti-proliferative and pro-myogenic proteins at the myogenin promoter. Interacts with TP53; interaction is stress-dependent. Forms a complex with EP300 and TP53; this complex binds CDKN1A promoter leading to transcriptional induction of CDKN1A. Post-translationally, phosphorylated. Phosphorylation promotes DNA-binding activity. In terms of processing, acetylated. In terms of tissue distribution, highly expressed in pancreas and both ovaries and testes.

It is found in the nucleus. It localises to the cytoplasm. The protein resides in the perinuclear region. In terms of biological role, transcription regulator that converts stress signals into a program of gene expression that empowers cells with resistance to the stress induced by a change in their microenvironment. Thereby participates in the regulation of many processes namely cell-cycle, apoptosis, autophagy and DNA repair responses. Controls cell cycle progression and protects cells from genotoxic stress induced by doxorubicin through the complex formation with TP53 and EP300 that binds CDKN1A promoter leading to transcriptional induction of CDKN1A. Protects pancreatic cancer cells from stress-induced cell death by binding the RELB promoter and activating its transcription, leading to IER3 transactivation. Negatively regulates apoptosis through interaction with PTMA. Inhibits autophagy-induced apoptosis in cardiac cells through FOXO3 interaction, inducing cytoplasmic translocation of FOXO3 thereby preventing the FOXO3 association with the pro-autophagic BNIP3 promoter. Inhibits cell growth and facilitates programmed cell death by apoptosis after adriamycin-induced DNA damage through transactivation of TP53. Regulates methamphetamine-induced apoptosis and autophagy through DDIT3-mediated endoplasmic reticulum stress pathway. Participates in DNA repair following gamma-irradiation by facilitating DNA access of the transcription machinery through interaction with MSL1 leading to inhibition of histone H4' Lys-16' acetylation (H4K16ac). Coactivator of PAX2 transcription factor activity, both by recruiting the EP300 cofactor to increase PAX2 transcription factor activity and by binding PAXIP1 to suppress PAXIP1-induced inhibition on PAX2. Positively regulates cell cycle progression through interaction with COPS5 inducing cytoplasmic translocation of CDKN1B leading to the CDKN1B degradation. Coordinates, through its interaction with EP300, the assiociation of MYOD1, EP300 and DDX5 to the MYOG promoter, leading to inhibition of cell-cycle progression and myogenic differentiation promotion. Negatively regulates beta cell proliferation via inhibition of cell-cycle regulatory genes expression through the suppression of their promoter activities. Also required for LHB expression and ovarian maturation. Exacerbates CNS inflammation and demyelination upon cuprizone treatment. This Mus musculus (Mouse) protein is Nuclear protein 1.